Reading from the N-terminus, the 173-residue chain is Protein PLASTID REDOX INSENSITIVE 2, chloroplastic (173 aa).

Residues 1–55 (MATRAWVAAAVALNPQLLPLRSCSPTKSVSPAQRSASMGLRLRSGRPCLGKFVCR) constitute a chloroplast transit peptide.

It is found in the plastid. Its subcellular location is the chloroplast stroma. The protein localises to the chloroplast nucleoid. Its function is as follows. Required for the activity of the plastid-encoded RNA polymerase (PEP) and full expression of genes transcribed by PEP. The protein is Protein PLASTID REDOX INSENSITIVE 2, chloroplastic of Zea mays (Maize).